The primary structure comprises 141 residues: Nucleoside diphosphate kinase (141 aa).

ATP-binding residues include K11, F59, R87, T93, R104, and N114. H117 (pros-phosphohistidine intermediate) is an active-site residue.

Belongs to the NDK family. In terms of assembly, homotetramer. Mg(2+) serves as cofactor.

Its subcellular location is the cytoplasm. It catalyses the reaction a 2'-deoxyribonucleoside 5'-diphosphate + ATP = a 2'-deoxyribonucleoside 5'-triphosphate + ADP. The enzyme catalyses a ribonucleoside 5'-diphosphate + ATP = a ribonucleoside 5'-triphosphate + ADP. Major role in the synthesis of nucleoside triphosphates other than ATP. The ATP gamma phosphate is transferred to the NDP beta phosphate via a ping-pong mechanism, using a phosphorylated active-site intermediate. The chain is Nucleoside diphosphate kinase from Mannheimia succiniciproducens (strain KCTC 0769BP / MBEL55E).